The primary structure comprises 102 residues: Small ribosomal subunit protein uS10 (102 aa).

This sequence belongs to the universal ribosomal protein uS10 family. In terms of assembly, part of the 30S ribosomal subunit.

Functionally, involved in the binding of tRNA to the ribosomes. This Lactobacillus delbrueckii subsp. bulgaricus (strain ATCC 11842 / DSM 20081 / BCRC 10696 / JCM 1002 / NBRC 13953 / NCIMB 11778 / NCTC 12712 / WDCM 00102 / Lb 14) protein is Small ribosomal subunit protein uS10.